The following is a 455-amino-acid chain: Glutamate--tRNA ligase (455 aa).

The 'HIGH' region motif lies at 8–18; the sequence is PSPTGYLHIGG. The 'KMSKS' region signature appears at 231-235; sequence RLSKR. Lysine 234 serves as a coordination point for ATP.

This sequence belongs to the class-I aminoacyl-tRNA synthetase family. Glutamate--tRNA ligase type 1 subfamily. Monomer.

It localises to the cytoplasm. The catalysed reaction is tRNA(Glu) + L-glutamate + ATP = L-glutamyl-tRNA(Glu) + AMP + diphosphate. Catalyzes the attachment of glutamate to tRNA(Glu) in a two-step reaction: glutamate is first activated by ATP to form Glu-AMP and then transferred to the acceptor end of tRNA(Glu). The polypeptide is Glutamate--tRNA ligase (Vesicomyosocius okutanii subsp. Calyptogena okutanii (strain HA)).